Here is a 425-residue protein sequence, read N- to C-terminus: Serine hydroxymethyltransferase (425 aa).

(6S)-5,6,7,8-tetrahydrofolate-binding positions include leucine 128 and 132–134 (GHL). At lysine 237 the chain carries N6-(pyridoxal phosphate)lysine.

Belongs to the SHMT family. As to quaternary structure, homodimer. Pyridoxal 5'-phosphate is required as a cofactor.

The protein localises to the cytoplasm. It carries out the reaction (6R)-5,10-methylene-5,6,7,8-tetrahydrofolate + glycine + H2O = (6S)-5,6,7,8-tetrahydrofolate + L-serine. Its pathway is one-carbon metabolism; tetrahydrofolate interconversion. It participates in amino-acid biosynthesis; glycine biosynthesis; glycine from L-serine: step 1/1. Its function is as follows. Catalyzes the reversible interconversion of serine and glycine with tetrahydrofolate (THF) serving as the one-carbon carrier. This reaction serves as the major source of one-carbon groups required for the biosynthesis of purines, thymidylate, methionine, and other important biomolecules. Also exhibits THF-independent aldolase activity toward beta-hydroxyamino acids, producing glycine and aldehydes, via a retro-aldol mechanism. This Wolbachia pipientis wMel protein is Serine hydroxymethyltransferase.